We begin with the raw amino-acid sequence, 139 residues long: Interleukin-5 (139 aa).

The N-terminal stretch at 1–19 (MMKILVCLPLLTLYAGCVY) is a signal peptide. Residues N48, N77, and N91 are each glycosylated (N-linked (GlcNAc...) asparagine).

Belongs to the IL-5 family. In terms of assembly, homodimer; disulfide-linked. Interacts with IL5RA. Interacts with CSF2RB.

The protein resides in the secreted. Homodimeric cytokine expressed predominantly by T-lymphocytes and NK cells that plays an important role in the survival, differentiation, and chemotaxis of eosinophils. Also acts on activated and resting B-cells to induce immunoglobulin production, growth, and differentiation. Mechanistically, exerts its biological effects through a receptor composed of IL5RA subunit and the cytokine receptor common subunit beta/CSF2RB. Binding to the receptor leads to activation of various kinases including LYN, SYK and JAK2 and thereby propagates signals through the RAS-MAPK and JAK-STAT5 pathways respectively. The protein is Interleukin-5 (IL5) of Notamacropus eugenii (Tammar wallaby).